The chain runs to 327 residues: L-lactate dehydrogenase (327 aa).

NAD(+) is bound by residues Val18, Asp39, Arg44, Tyr69, and 83–84 (GL). Substrate-binding positions include Gln86, Arg92, and 124 to 127 (NPVD). NAD(+) contacts are provided by residues 122 to 124 (AAN) and Ser147. 152 to 155 (DSAR) provides a ligand contact to substrate. Beta-D-fructose 1,6-bisphosphate-binding residues include Arg157 and His172. The active-site Proton acceptor is the His179. Tyr224 carries the phosphotyrosine modification. Thr233 lines the substrate pocket.

It belongs to the LDH/MDH superfamily. LDH family. As to quaternary structure, homotetramer.

The protein localises to the cytoplasm. The enzyme catalyses (S)-lactate + NAD(+) = pyruvate + NADH + H(+). Its pathway is fermentation; pyruvate fermentation to lactate; (S)-lactate from pyruvate: step 1/1. With respect to regulation, allosterically activated by fructose 1,6-bisphosphate (FBP). In terms of biological role, catalyzes the conversion of lactate to pyruvate. The polypeptide is L-lactate dehydrogenase (Streptococcus suis (strain 98HAH33)).